The following is a 339-amino-acid chain: Leucine-rich repeat-containing protein 75A (339 aa).

Residues 1-25 are disordered; that stretch reads MGTRQTKGSLAERASPGAAPGPRRE. Residues 11-21 show a composition bias toward low complexity; the sequence is AERASPGAAPG. LRR repeat units follow at residues 203–216 and 228–241; these read VDSVELGFTGLTDD and LPRLTTLALNGNRL. The segment at 294 to 339 is disordered; sequence LPTILELGEGPGTGEEAREGTDQQDPIGSPVTPARGQESTECVIQT. Phosphoserine is present on Ser322. Thr325 is modified (phosphothreonine). Residues 330–339 show a composition bias toward polar residues; that stretch reads QESTECVIQT.

Belongs to the LRRC75 family.

This chain is Leucine-rich repeat-containing protein 75A (Lrrc75a), found in Mus musculus (Mouse).